The primary structure comprises 252 residues: Phosphate import ATP-binding protein PstB (252 aa).

The ABC transporter domain occupies 6–247; the sequence is ISAENLNLFY…PKDQRTEDYI (242 aa). An ATP-binding site is contributed by 38–45; sequence GPSGCGKS.

The protein belongs to the ABC transporter superfamily. Phosphate importer (TC 3.A.1.7) family. The complex is composed of two ATP-binding proteins (PstB), two transmembrane proteins (PstC and PstA) and a solute-binding protein (PstS).

Its subcellular location is the cell membrane. It carries out the reaction phosphate(out) + ATP + H2O = ADP + 2 phosphate(in) + H(+). Functionally, part of the ABC transporter complex PstSACB involved in phosphate import. Responsible for energy coupling to the transport system. In Heliobacterium mobile (Heliobacillus mobilis), this protein is Phosphate import ATP-binding protein PstB.